The chain runs to 299 residues: Protease HtpX homolog (299 aa).

2 consecutive transmembrane segments (helical) span residues Ile15–Phe35 and Gly39–Phe59. Residue His143 coordinates Zn(2+). Glu144 is an active-site residue. His147 serves as a coordination point for Zn(2+). Transmembrane regions (helical) follow at residues Ile158 to Trp178 and Ile198 to Val218. Glu227 contacts Zn(2+).

Belongs to the peptidase M48B family. It depends on Zn(2+) as a cofactor.

Its subcellular location is the cell membrane. The polypeptide is Protease HtpX homolog (Streptococcus pneumoniae serotype 19F (strain G54)).